Consider the following 375-residue polypeptide: Glutamate 5-kinase (375 aa).

K3 is an ATP binding site. Residues S44, D131, and N143 each coordinate substrate. ATP is bound by residues 163 to 164 (SD) and 205 to 211 (TGGMVTK). Positions 269 to 346 (EGTLWVDDGA…GDIEALLGYR (78 aa)) constitute a PUA domain.

It belongs to the glutamate 5-kinase family.

The protein localises to the cytoplasm. It carries out the reaction L-glutamate + ATP = L-glutamyl 5-phosphate + ADP. It functions in the pathway amino-acid biosynthesis; L-proline biosynthesis; L-glutamate 5-semialdehyde from L-glutamate: step 1/2. Functionally, catalyzes the transfer of a phosphate group to glutamate to form L-glutamate 5-phosphate. In Rhodospirillum rubrum (strain ATCC 11170 / ATH 1.1.1 / DSM 467 / LMG 4362 / NCIMB 8255 / S1), this protein is Glutamate 5-kinase.